Here is a 217-residue protein sequence, read N- to C-terminus: Small ribosomal subunit protein uS3c (217 aa).

One can recognise a KH type-2 domain in the interval 43–117 (IKNYVQKNRK…KLNIAITRIA (75 aa)).

It belongs to the universal ribosomal protein uS3 family. As to quaternary structure, part of the 30S ribosomal subunit.

It localises to the plastid. It is found in the chloroplast. The chain is Small ribosomal subunit protein uS3c (rps3) from Ranunculus macranthus (Large buttercup).